Reading from the N-terminus, the 404-residue chain is S-adenosylmethionine synthase (404 aa).

His17 contributes to the ATP binding site. Asp19 is a Mg(2+) binding site. Glu45 contacts K(+). Positions 58 and 101 each coordinate L-methionine. The tract at residues 101 to 111 (QSPDIAMGVDQ) is flexible loop. ATP-binding positions include 177–179 (DGK), 244–245 (RF), Asp253, 259–260 (RK), Ala276, and Lys280. Position 253 (Asp253) interacts with L-methionine. An L-methionine-binding site is contributed by Lys284.

The protein belongs to the AdoMet synthase family. In terms of assembly, homotetramer; dimer of dimers. The cofactor is Mg(2+). K(+) is required as a cofactor.

It is found in the cytoplasm. It carries out the reaction L-methionine + ATP + H2O = S-adenosyl-L-methionine + phosphate + diphosphate. The protein operates within amino-acid biosynthesis; S-adenosyl-L-methionine biosynthesis; S-adenosyl-L-methionine from L-methionine: step 1/1. Functionally, catalyzes the formation of S-adenosylmethionine (AdoMet) from methionine and ATP. The overall synthetic reaction is composed of two sequential steps, AdoMet formation and the subsequent tripolyphosphate hydrolysis which occurs prior to release of AdoMet from the enzyme. The protein is S-adenosylmethionine synthase of Geobacillus thermodenitrificans (strain NG80-2).